We begin with the raw amino-acid sequence, 97 residues long: Aspartyl/glutamyl-tRNA(Asn/Gln) amidotransferase subunit C (97 aa).

It belongs to the GatC family. In terms of assembly, heterotrimer of A, B and C subunits.

It carries out the reaction L-glutamyl-tRNA(Gln) + L-glutamine + ATP + H2O = L-glutaminyl-tRNA(Gln) + L-glutamate + ADP + phosphate + H(+). The enzyme catalyses L-aspartyl-tRNA(Asn) + L-glutamine + ATP + H2O = L-asparaginyl-tRNA(Asn) + L-glutamate + ADP + phosphate + 2 H(+). Allows the formation of correctly charged Asn-tRNA(Asn) or Gln-tRNA(Gln) through the transamidation of misacylated Asp-tRNA(Asn) or Glu-tRNA(Gln) in organisms which lack either or both of asparaginyl-tRNA or glutaminyl-tRNA synthetases. The reaction takes place in the presence of glutamine and ATP through an activated phospho-Asp-tRNA(Asn) or phospho-Glu-tRNA(Gln). The protein is Aspartyl/glutamyl-tRNA(Asn/Gln) amidotransferase subunit C of Listeria monocytogenes serotype 4b (strain CLIP80459).